Consider the following 433-residue polypeptide: Serine hydroxymethyltransferase (433 aa).

(6S)-5,6,7,8-tetrahydrofolate contacts are provided by residues L132 and 136–138; that span reads GHL. The residue at position 241 (K241) is an N6-(pyridoxal phosphate)lysine.

The protein belongs to the SHMT family. In terms of assembly, homodimer. Pyridoxal 5'-phosphate is required as a cofactor.

It is found in the cytoplasm. It carries out the reaction (6R)-5,10-methylene-5,6,7,8-tetrahydrofolate + glycine + H2O = (6S)-5,6,7,8-tetrahydrofolate + L-serine. Its pathway is one-carbon metabolism; tetrahydrofolate interconversion. The protein operates within amino-acid biosynthesis; glycine biosynthesis; glycine from L-serine: step 1/1. In terms of biological role, catalyzes the reversible interconversion of serine and glycine with tetrahydrofolate (THF) serving as the one-carbon carrier. This reaction serves as the major source of one-carbon groups required for the biosynthesis of purines, thymidylate, methionine, and other important biomolecules. Also exhibits THF-independent aldolase activity toward beta-hydroxyamino acids, producing glycine and aldehydes, via a retro-aldol mechanism. This Nitrobacter winogradskyi (strain ATCC 25391 / DSM 10237 / CIP 104748 / NCIMB 11846 / Nb-255) protein is Serine hydroxymethyltransferase.